A 147-amino-acid polypeptide reads, in one-letter code: Hemoglobin subunit beta (147 aa).

Residue Val-2 is modified to N-acetylvaline. The 145-residue stretch at 3–147 (HLTGEEKAAV…VANALAHKYH (145 aa)) folds into the Globin domain. Phosphothreonine is present on Thr-13. At Ser-45 the chain carries Phosphoserine. Residue Lys-60 is modified to N6-acetyllysine. Position 64 (His-64) interacts with heme b. Residue Lys-83 is modified to N6-acetyllysine. Position 93 (His-93) interacts with heme b. Residue Cys-94 is modified to S-nitrosocysteine. Lys-145 is subject to N6-acetyllysine.

This sequence belongs to the globin family. In terms of assembly, heterotetramer of two alpha chains and two beta chains. Red blood cells.

Involved in oxygen transport from the lung to the various peripheral tissues. The protein is Hemoglobin subunit beta (HBB) of Lagothrix lagotricha (Brown woolly monkey).